The sequence spans 262 residues: Ferric siderophore reductase (262 aa).

Residues C244, C245, C256, and C259 each coordinate [2Fe-2S] cluster.

In terms of assembly, monomer. The cofactor is [2Fe-2S] cluster.

The protein localises to the cytoplasm. It is found in the cell inner membrane. With respect to regulation, displays pH dependent redox properties. SufD is necessary for the stability of FhuF. Its function is as follows. Siderophore-iron reductase which is involved in iron removal from the hydroxamate-type siderophores coprogen, ferrichrome and ferrioxamine B after their transport into the cell. Binds both the iron-loaded and the apo forms of ferrichrome. The polypeptide is Ferric siderophore reductase (fhuF) (Escherichia coli (strain K12)).